The chain runs to 461 residues: Argininosuccinate lyase (461 aa).

This sequence belongs to the lyase 1 family. Argininosuccinate lyase subfamily.

Its subcellular location is the cytoplasm. It catalyses the reaction 2-(N(omega)-L-arginino)succinate = fumarate + L-arginine. The protein operates within amino-acid biosynthesis; L-arginine biosynthesis; L-arginine from L-ornithine and carbamoyl phosphate: step 3/3. The protein is Argininosuccinate lyase of Dehalococcoides mccartyi (strain ATCC BAA-2100 / JCM 16839 / KCTC 5957 / BAV1).